The following is a 179-amino-acid chain: M-phase-specific PLK1-interacting protein (179 aa).

Residues 1–135 are disordered; it reads MQRQNFRPPT…RVREKRMSNE (135 aa). An Asymmetric dimethylarginine modification is found at Arg37. 2 positions are modified to phosphoserine: Ser40 and Ser47. A Phosphothreonine modification is found at Thr51. Arg57 bears the Omega-N-methylarginine mark. Residues Arg59 and Arg68 each carry the asymmetric dimethylarginine modification. The span at 60–71 shows a compositional bias: low complexity; the sequence is PYGSSHSPRHGG. The residue at position 72 (Ser72) is a Phosphoserine. Arg77 is modified (asymmetric dimethylarginine). The span at 79–109 shows a compositional bias: low complexity; it reads GSPSPGGYPGSYSRSPAGSQQQFGYSPGQQQ. Phosphoserine is present on residues Ser80, Ser82, Ser93, Ser104, and Ser115. Over residues 110 to 122 the composition is skewed to polar residues; that stretch reads THPQGSPRTSTPF. Arg117 bears the Omega-N-methylarginine mark. Residue Thr120 is modified to Phosphothreonine. Ser124 and Ser133 each carry phosphoserine.

As to quaternary structure, interacts with PLK1; phosphorylation-dependent. In terms of processing, phosphorylated during mitosis in the cell cycle probably by CDK1. Expressed at highest levels in liver and kidney; intermediate expression in skeletal muscle, pancreas, heart and placenta; low expression in brain and lung. Expressed in epidermis and hair follicles.

It is found in the nucleus. It localises to the cytoplasm. The protein localises to the cytoskeleton. Its subcellular location is the microtubule organizing center. The protein resides in the centrosome. In terms of biological role, may play a role in maintenance of cell cycle integrity by regulating mitosis or cytokinesis. This is M-phase-specific PLK1-interacting protein (MPLKIP) from Homo sapiens (Human).